We begin with the raw amino-acid sequence, 273 residues long: MGKLLRKPLNERIAPGVTLVQDINQGNSPLSYVGFRLIELEKGAVYQEALTDLECCIVALTGKITVSEGDDIFAEIGTRANVFEKIPTDSVFISGGRAFQVKADTEKARVALCYSPANRDLPTTLIKASDNSIEQRGKYQNKRLVHNILPDVSGVASSLLVVEVYTNGGNFSSYPPHKHDRDNLPAESLLEESYYHEINPEQGFIFQRVYTDDRALDETMAVEHQNAVIVPEGYHPVGVPDGYDSYYLNVMAGPKRVWKFHNDPDHEWILERD.

It belongs to the isomerase IolB family.

It catalyses the reaction 5-deoxy-D-glucuronate = 5-dehydro-2-deoxy-D-gluconate. Its pathway is polyol metabolism; myo-inositol degradation into acetyl-CoA; acetyl-CoA from myo-inositol: step 4/7. Functionally, involved in the isomerization of 5-deoxy-glucuronate (5DG) to 5-dehydro-2-deoxy-D-gluconate (DKG or 2-deoxy-5-keto-D-gluconate). This is 5-deoxy-glucuronate isomerase from Listeria innocua serovar 6a (strain ATCC BAA-680 / CLIP 11262).